The sequence spans 456 residues: Ribulose bisphosphate carboxylase large chain (456 aa).

Lys-7 bears the N6,N6,N6-trimethyllysine mark. Substrate-binding residues include Asn-116 and Thr-166. The Proton acceptor role is filled by Lys-168. Position 170 (Lys-170) interacts with substrate. The Mg(2+) site is built by Lys-194, Asp-196, and Glu-197. Residue Lys-194 is modified to N6-carboxylysine. His-287 serves as the catalytic Proton acceptor. Arg-288, His-320, and Ser-372 together coordinate substrate.

The protein belongs to the RuBisCO large chain family. Type I subfamily. In terms of assembly, heterohexadecamer of 8 large chains and 8 small chains; disulfide-linked. The disulfide link is formed within the large subunit homodimers. It depends on Mg(2+) as a cofactor. Post-translationally, the disulfide bond which can form in the large chain dimeric partners within the hexadecamer appears to be associated with oxidative stress and protein turnover.

The protein resides in the plastid. It localises to the chloroplast. The catalysed reaction is 2 (2R)-3-phosphoglycerate + 2 H(+) = D-ribulose 1,5-bisphosphate + CO2 + H2O. The enzyme catalyses D-ribulose 1,5-bisphosphate + O2 = 2-phosphoglycolate + (2R)-3-phosphoglycerate + 2 H(+). Functionally, ruBisCO catalyzes two reactions: the carboxylation of D-ribulose 1,5-bisphosphate, the primary event in carbon dioxide fixation, as well as the oxidative fragmentation of the pentose substrate in the photorespiration process. Both reactions occur simultaneously and in competition at the same active site. The protein is Ribulose bisphosphate carboxylase large chain of Barnardia japonica (Chinese squill).